The sequence spans 187 residues: MISSNDFRTGTTIELDGAVWRVVEFLHVKPGKGSAFVRTKLKAVQSGSVVEKTFRAGEMLQQALLEKSTLQHTYMEGEDFVFMDMSTYEETRLTAKQIGDSRKYLKEGMEVNVVTWNEKPLEVELPNSVVLEIAQTDPGVKGDTATGGTKPAILETGAQVMVPLFLSIGEKIKVDTRNDTYLGRENG.

It belongs to the elongation factor P family.

It is found in the cytoplasm. Its pathway is protein biosynthesis; polypeptide chain elongation. Functionally, involved in peptide bond synthesis. Stimulates efficient translation and peptide-bond synthesis on native or reconstituted 70S ribosomes in vitro. Probably functions indirectly by altering the affinity of the ribosome for aminoacyl-tRNA, thus increasing their reactivity as acceptors for peptidyl transferase. In Synechococcus sp. (strain CC9311), this protein is Elongation factor P.